Reading from the N-terminus, the 254-residue chain is Sugar fermentation stimulation protein homolog (254 aa).

The protein belongs to the SfsA family.

The sequence is that of Sugar fermentation stimulation protein homolog from Parasynechococcus marenigrum (strain WH8102).